A 351-amino-acid polypeptide reads, in one-letter code: Phosphoribosylformylglycinamidine cyclo-ligase (351 aa).

The protein belongs to the AIR synthase family.

It localises to the cytoplasm. The enzyme catalyses 2-formamido-N(1)-(5-O-phospho-beta-D-ribosyl)acetamidine + ATP = 5-amino-1-(5-phospho-beta-D-ribosyl)imidazole + ADP + phosphate + H(+). The protein operates within purine metabolism; IMP biosynthesis via de novo pathway; 5-amino-1-(5-phospho-D-ribosyl)imidazole from N(2)-formyl-N(1)-(5-phospho-D-ribosyl)glycinamide: step 2/2. This is Phosphoribosylformylglycinamidine cyclo-ligase from Burkholderia lata (strain ATCC 17760 / DSM 23089 / LMG 22485 / NCIMB 9086 / R18194 / 383).